The following is a 447-amino-acid chain: Phosphoglucosamine mutase (447 aa).

S104 functions as the Phosphoserine intermediate in the catalytic mechanism. Positions 104, 243, 245, and 247 each coordinate Mg(2+). Position 104 is a phosphoserine (S104).

The protein belongs to the phosphohexose mutase family. Requires Mg(2+) as cofactor. Post-translationally, activated by phosphorylation.

It catalyses the reaction alpha-D-glucosamine 1-phosphate = D-glucosamine 6-phosphate. Catalyzes the conversion of glucosamine-6-phosphate to glucosamine-1-phosphate. The polypeptide is Phosphoglucosamine mutase (Corynebacterium diphtheriae (strain ATCC 700971 / NCTC 13129 / Biotype gravis)).